We begin with the raw amino-acid sequence, 368 residues long: MSECFTVMGDHIELVAGCYEQIVFGYRVCPADEEWTIEPTFTHHAHTASLNAVSSSNQFIATGSKDETIQLYDMCKKTEHGALLHHDGTISCLEFYGTSHLLSGGQDGLICVWSTKKWECLKTIRAHKGQVTSLSVHPSGKLALSVGTDKTLRTWNLIEGRSAFIKNIKQNAEIVLWSPDGDKYAVVVNDKVDIYTLDSATIIGTIAFTKRISCLKFLKNSLLAVGGDDESVRIYDVTSQKCVCEFKAHENRVKAIESFMKDDFCVLVTASNDGFIKLWKLNLESIESPTLLGQLNTTARLTCLCVWMPGETKETAEQPAQATTSEDVLDPLVPVRSKRVRILGEEVIMEDEKGSKTQGKKKKRQKVQ.

5 WD repeats span residues 45–82 (AHTA…EHGA), 85–123 (HHDG…CLKT), 126–165 (AHKG…SAFI), 207–245 (AFTK…CVCE), and 248–289 (AHEN…IESP).

It localises to the nucleus. Its subcellular location is the nucleolus. Its function is as follows. Negatively regulates the PAK1 kinase. PAK1 is a member of the PAK kinase family, which has been shown to play a positive role in the regulation of signaling pathways involving MAPK8 and RELA. PAK1 exists as an inactive homodimer, which is activated by binding of small GTPases such as CDC42 to an N-terminal regulatory domain. PAK1IP1 also binds to the N-terminus of PAK1, and inhibits the specific activation of PAK1 by CDC42. May be involved in ribosomal large subunit assembly. This chain is p21-activated protein kinase-interacting protein 1-like (pak1ip1), found in Danio rerio (Zebrafish).